Reading from the N-terminus, the 132-residue chain is Homeobox protein ceh-1 (132 aa).

Positions 1–60 form a DNA-binding region, homeobox; sequence MRRARTAFTYEQLVALENKFKTSRYLSVVERLNLAIQLQLSETQVKIWFQNRRTKWKKHN. Positions 56–80 are disordered; that stretch reads WKKHNPGQDANTPQTPPSSDETQIQ. Positions 63-80 are enriched in polar residues; it reads QDANTPQTPPSSDETQIQ.

It is found in the nucleus. The sequence is that of Homeobox protein ceh-1 (ceh-1) from Caenorhabditis elegans.